Here is a 326-residue protein sequence, read N- to C-terminus: Prenyl transferase nodC (326 aa).

A helical membrane pass occupies residues 8–28 (LAAVLFSALFSLGVILVHLPW). H95 is a binding site for isopentenyl diphosphate. D102 and D106 together coordinate Mg(2+). R111 contributes to the dimethylallyl diphosphate binding site. Residue N139 is glycosylated (N-linked (GlcNAc...) asparagine). K195 contacts dimethylallyl diphosphate. The N-linked (GlcNAc...) asparagine glycan is linked to N210.

Belongs to the FPP/GGPP synthase family.

It localises to the membrane. The protein operates within secondary metabolite biosynthesis. In terms of biological role, cytochrome P450 monooxygenase; part of the gene cluster that mediates the biosynthesis of the indole diterpenes nodulisporic acids (NA). Nodulisporic acid A (NAA) and its chemically modified derivatives are of particular significance because of their highly potent insecticidal activity against blood-feeding arthropods and lack of observable adverse effects on mammals, in particular the tremogenicity associated with the paspaline-derived IDTs is not observed. The geranylgeranyl diphosphate (GGPP) synthase ggs1, localized outside of the cluster, is proposed to catalyze the first step in nodulisporic acid biosynthesis via conversion of farnesyl pyrophosphate and isopentyl pyrophosphate into geranylgeranyl pyrophosphate (GGPP). Condensation of indole-3-glycerol phosphate with GGPP by the prenyl transferase nodC then forms 3-geranylgeranylindole (3-GGI). Epoxidation by the FAD-dependent monooxygenase nodM leads to a single-epoxidized-GGI that is substrate of the terpene cyclase nodB for cyclization to yield emindole SB. The terminal methyl carbon, C28, of emindole SB is then oxidized by the cytochrome P450 monooxygenase nodW to produce nodulisporic acid F (NAF), the pentacyclic core of NAA. NAF is converted to nodulisporic acid E (NAE) via prenylation. This step is probably performed by one of the indole diterpene prenyltransferases nodD1 or nodD2. Several oxidation steps performed by the FAD-linked oxidoreductase nodO and one of the cytochrome P450 monooxygenase nodR, nodX or nodZ further convert NAE to nodulisporic acid D (NAD). NAD is substrate of cytochrome P450 monooxygenase nodJ to produce the precursor of nodulisporic acid C (NAC), converted to NAC by one of the indole diterpene prenyltransferases nodD1 or nodD2. The FAD-dependent monooxygenase nodY2 then oxidizes NAC to nodulisporic acid B (NAB). Finally NAB is converted to NAA by one of the cytochrome P450 monooxygenases nodR, nodX or nodZ. In Hypoxylon pulicicidum, this protein is Prenyl transferase nodC.